The chain runs to 489 residues: Acetyl-coenzyme A carboxylase carboxyl transferase subunit beta, chloroplastic (489 aa).

Residues 222–489 form the CoA carboxyltransferase N-terminal domain; the sequence is LWVQCENCYG…FFPLNSNSIK (268 aa). Cysteine 226, cysteine 229, cysteine 245, and cysteine 248 together coordinate Zn(2+). Residues 226–248 form a C4-type zinc finger; sequence CENCYGLNYKKFFRSKMNICEQC.

This sequence belongs to the AccD/PCCB family. As to quaternary structure, acetyl-CoA carboxylase is a heterohexamer composed of biotin carboxyl carrier protein, biotin carboxylase and 2 subunits each of ACCase subunit alpha and ACCase plastid-coded subunit beta (accD). Requires Zn(2+) as cofactor.

The protein resides in the plastid. It localises to the chloroplast stroma. It carries out the reaction N(6)-carboxybiotinyl-L-lysyl-[protein] + acetyl-CoA = N(6)-biotinyl-L-lysyl-[protein] + malonyl-CoA. The protein operates within lipid metabolism; malonyl-CoA biosynthesis; malonyl-CoA from acetyl-CoA: step 1/1. Its function is as follows. Component of the acetyl coenzyme A carboxylase (ACC) complex. Biotin carboxylase (BC) catalyzes the carboxylation of biotin on its carrier protein (BCCP) and then the CO(2) group is transferred by the transcarboxylase to acetyl-CoA to form malonyl-CoA. This Buxus microphylla (Littleleaf boxwood) protein is Acetyl-coenzyme A carboxylase carboxyl transferase subunit beta, chloroplastic.